Reading from the N-terminus, the 297-residue chain is HTH-type transcriptional regulator AceR (297 aa).

The HTH lysR-type domain occupies 1–60 (MNINQEQLLMFQAVMETGSFSAAARKLGKVPSAVSMSIANLEIDLNLTLFERKGREPTPT). Residues 20–39 (FSAAARKLGKVPSAVSMSIA) constitute a DNA-binding region (H-T-H motif).

Belongs to the LysR transcriptional regulatory family. In terms of assembly, homodimer and homotetramer. Binding of chlorhexidine at the inducer-binding domain causes a quaternary structural change that favors interactions between dimers to form tetramers.

The protein localises to the cytoplasm. Functionally, regulates the expression of the AceI transporter. Binds DNA and chlorhexidine. Binds to regulatory sites within the intergenic region between the aceI and aceR genes, and affects the interaction between RNA polymerase (RNAP) and promoter DNA both in the presence and in the absence of chlorhexidine. In the absence of chlorhexidine, prevents transcription of the aceI gene by disrupting interactions between the promoter DNA and RNAP. In the presence of chlorhexidine, activates expression of aceI. When AceR interacts with chlorhexidine, it undergoes a conformational change and the tetrameric form either releases the DNA or shifts the position of the DNA-binding region to allow RNAP to bind onto the promoter DNA to proceed with aceI transcription. In Acinetobacter baumannii (strain ATCC 17978 / DSM 105126 / CIP 53.77 / LMG 1025 / NCDC KC755 / 5377), this protein is HTH-type transcriptional regulator AceR.